The sequence spans 244 residues: Phosphoadenosine 5'-phosphosulfate reductase (244 aa).

Cys-239 functions as the Nucleophile; cysteine thiosulfonate intermediate in the catalytic mechanism.

Belongs to the PAPS reductase family. CysH subfamily.

The protein localises to the cytoplasm. The enzyme catalyses [thioredoxin]-disulfide + sulfite + adenosine 3',5'-bisphosphate + 2 H(+) = [thioredoxin]-dithiol + 3'-phosphoadenylyl sulfate. It participates in sulfur metabolism; hydrogen sulfide biosynthesis; sulfite from sulfate: step 3/3. Catalyzes the formation of sulfite from phosphoadenosine 5'-phosphosulfate (PAPS) using thioredoxin as an electron donor. In Photorhabdus laumondii subsp. laumondii (strain DSM 15139 / CIP 105565 / TT01) (Photorhabdus luminescens subsp. laumondii), this protein is Phosphoadenosine 5'-phosphosulfate reductase.